The following is a 31-amino-acid chain: Cytochrome b6-f complex subunit 6 (31 aa).

A helical membrane pass occupies residues 3-23; the sequence is ALIGYILLMTLMFSLAAGLYF.

Belongs to the PetL family. The 4 large subunits of the cytochrome b6-f complex are cytochrome b6, subunit IV (17 kDa polypeptide, PetD), cytochrome f and the Rieske protein, while the 4 small subunits are PetG, PetL, PetM and PetN. The complex functions as a dimer.

The protein localises to the plastid. The protein resides in the chloroplast thylakoid membrane. Component of the cytochrome b6-f complex, which mediates electron transfer between photosystem II (PSII) and photosystem I (PSI), cyclic electron flow around PSI, and state transitions. PetL is important for photoautotrophic growth as well as for electron transfer efficiency and stability of the cytochrome b6-f complex. The chain is Cytochrome b6-f complex subunit 6 from Emiliania huxleyi (Coccolithophore).